We begin with the raw amino-acid sequence, 270 residues long: METKPYLIALDLDGTLLKDDKTISENTLHTIQRLKDDGHYVCISTGRPYRSSSMYYQQMELTTPIVNFNGAFVHHPQDDSWGRYHTSLPLDVVKQLVDISESYNVHNVLAEVIDDVYFHYHDEHLIDAFNMNTTNVTVGDLRENLGEDVTSVLIHAKEEDVPAIRSYLSDVHAEVIDHRRWAAPWHVIEIIKSGMNKAVGLQKISDYYGVPRERIIAFGDEDNDLEMLEFAGCGVAMGNGIDAVKQIANRTTATNEEDGVARFLKEYFSL.

D11 serves as the catalytic Nucleophile. D11 is a binding site for Mg(2+). L12 contacts phosphate. D13 contacts Mg(2+). Phosphate contacts are provided by residues 45-46 (TG) and K197. Mg(2+) is bound at residue D220. N223 contacts phosphate.

Belongs to the HAD-like hydrolase superfamily. Cof family. Mg(2+) is required as a cofactor.

It carries out the reaction 5-amino-6-(5-phospho-D-ribitylamino)uracil + H2O = 5-amino-6-(D-ribitylamino)uracil + phosphate. It participates in cofactor biosynthesis; riboflavin biosynthesis; 5-amino-6-(D-ribitylamino)uracil from GTP: step 4/4. Catalyzes the dephosphorylation of the riboflavin precursor 5-amino-6-(5-phospho-D-ribitylamino)uracil and of flavin mononucleotide (FMN) in vitro. The polypeptide is 5-amino-6-(5-phospho-D-ribitylamino)uracil phosphatase YitU (yitU) (Bacillus subtilis (strain 168)).